Reading from the N-terminus, the 260-residue chain is Neuraminyllactose-binding hemagglutinin (260 aa).

The signal sequence occupies residues 1-27 (MKANNHFKDFAWKKCLLGASVVALLVG). Cysteine 28 is lipidated: N-palmitoyl cysteine. Cysteine 28 is lipidated: S-diacylglycerol cysteine.

The protein localises to the cell outer membrane. The protein is Neuraminyllactose-binding hemagglutinin (hpaA) of Helicobacter pylori (strain ATCC 700392 / 26695) (Campylobacter pylori).